The following is a 542-amino-acid chain: Aminotriazole resistance protein (542 aa).

The Cytoplasmic portion of the chain corresponds to 1–108 (MGNQSLVVLT…SFGSEGNSKS (108 aa)). Residues 109-129 (WLMASFPLVSGSFILISGRLG) traverse the membrane as a helical segment. Residues 130 to 136 (DIYGLKK) are Extracellular-facing. A helical transmembrane segment spans residues 137 to 157 (MLLVGYVLVIIWSLICGITKY). Residues 158 to 172 (SGSDTFFIISRAFQG) lie on the Cytoplasmic side of the membrane. A helical transmembrane segment spans residues 173–193 (LGIAFVLPNVLGIIGNIYVGG). The Extracellular segment spans residues 194–198 (TFRKN). Residues 199-219 (IVISFVGAMAPIGATLGCLFA) form a helical membrane-spanning segment. Residues 220 to 231 (GLIGTEDPKQWP) lie on the Cytoplasmic side of the membrane. A helical transmembrane segment spans residues 232–252 (WAFYAYSIAAFINFVLSIYAI). At 253-262 (PSTIPTNIHH) the chain is on the extracellular side. Residues 263–283 (FSMDWIGSVLGVIGLILLNFV) traverse the membrane as a helical segment. Topologically, residues 284–295 (WNQAPISGWNQA) are cytoplasmic. The helical transmembrane segment at 296–316 (YIIVILIISVIFLVVFIIYEI) threads the bilayer. Residues 317-333 (RFAKTPLLPRAVIKDRH) lie on the Extracellular side of the membrane. Residues 334-354 (MIQIMLALFFGWGSFGIFTFY) traverse the membrane as a helical segment. The Cytoplasmic portion of the chain corresponds to 355–371 (YFQFQLNIRQYTALWAG). The helical transmembrane segment at 372–392 (GTYFMFLIWGIIAALLVGFTI) threads the bilayer. Over 393–399 (KNVSPSV) the chain is Extracellular. The chain crosses the membrane as a helical span at residues 400–420 (FLFFSMVAFNVGSIMASVTPV). Residues 421 to 429 (HETYFRTQL) lie on the Cytoplasmic side of the membrane. The helical transmembrane segment at 430 to 450 (GTMIILSFGMDLSFPASSIIF) threads the bilayer. Residues 451–505 (SDNLPMEYQGMAGSLVNTVVNYSMSLCLGMGATVETQVNSDGKHLLKGYRGAQYL) lie on the Extracellular side of the membrane. An N-linked (GlcNAc...) asparagine glycan is attached at N471. A helical transmembrane segment spans residues 506 to 526 (GIGLASLACMISGLYMVESFI). At 527 to 542 (KGRRARAAAEYDCTVA) the chain is on the cytoplasmic side.

Belongs to the major facilitator superfamily.

It is found in the membrane. Putative component of the machinery responsible for pumping aminotriazole (and possibly other toxic compounds) out of the cell. Probable ATP-dependent export permease. Appears to confer resistance only to aminotriazole. The protein is Aminotriazole resistance protein (ATR1) of Saccharomyces cerevisiae (strain ATCC 204508 / S288c) (Baker's yeast).